Reading from the N-terminus, the 279-residue chain is Elongation factor Ts (279 aa).

The involved in Mg(2+) ion dislocation from EF-Tu stretch occupies residues 80 to 83; that stretch reads TDFV.

The protein belongs to the EF-Ts family.

It localises to the cytoplasm. Associates with the EF-Tu.GDP complex and induces the exchange of GDP to GTP. It remains bound to the aminoacyl-tRNA.EF-Tu.GTP complex up to the GTP hydrolysis stage on the ribosome. In Borreliella burgdorferi (strain ATCC 35210 / DSM 4680 / CIP 102532 / B31) (Borrelia burgdorferi), this protein is Elongation factor Ts (tsf).